The primary structure comprises 571 residues: DM7 family protein CG15332 (571 aa).

The segment at 440–472 (TRDDGINTADYQSQFPELEPEPEPEPEDEGEDV) is disordered. Residues 457–471 (LEPEPEPEPEDEGED) show a composition bias toward acidic residues.

Belongs to the DM7 family.

In Drosophila melanogaster (Fruit fly), this protein is DM7 family protein CG15332.